A 213-amino-acid polypeptide reads, in one-letter code: DNA-directed RNA polymerase subunit alpha (213 aa).

This sequence belongs to the RNA polymerase alpha chain family. In plastids the minimal PEP RNA polymerase catalytic core is composed of four subunits: alpha, beta, beta', and beta''. When a (nuclear-encoded) sigma factor is associated with the core the holoenzyme is formed, which can initiate transcription.

The protein localises to the plastid. It is found in the chloroplast. The catalysed reaction is RNA(n) + a ribonucleoside 5'-triphosphate = RNA(n+1) + diphosphate. Functionally, DNA-dependent RNA polymerase catalyzes the transcription of DNA into RNA using the four ribonucleoside triphosphates as substrates. The polypeptide is DNA-directed RNA polymerase subunit alpha (rpoA) (Euglena stellata).